The chain runs to 218 residues: MALSLFTVGQFIFLFWTISITEANIDPAARAAAAAAASKAAVTAADAAAAAATIAASAASVAAATAADDAAASIATINAASAAAKSIAAAAAMAAKDTAAAAASAAAAAVASAAKALETINVKAAYAAATTANTAAAAAAATATTAAAAAAAKATIDNAAAAKAAAVATAVSDAAATAATAAAVAAATLEAAAAKAAATAVSAAAAAAAAAIAFAAAP.

The signal sequence occupies residues 1 to 23 (MALSLFTVGQFIFLFWTISITEA).

This sequence belongs to the type-I AFP family. In terms of assembly, homodimer. As to expression, detected in blood serum (at protein level). Detected in liver.

The protein localises to the secreted. Functionally, contributes to protect fish blood from freezing at subzero sea water temperatures. Lowers the blood freezing point by about 1.1 degrees at a concentration of 0.1 mg/ml, and by about 1.5 degrees at a concentration of 0.2 mg/ml. Binds to nascent ice crystals and prevents further growth. This Pseudopleuronectes americanus (Winter flounder) protein is Antifreeze protein Maxi.